Here is a 232-residue protein sequence, read N- to C-terminus: 5'-methylthioadenosine/S-adenosylhomocysteine nucleosidase (232 aa).

Glu12 serves as the catalytic Proton acceptor. Residues Gly78, Ile152, and 173–174 (ME) each bind substrate. Residue Asp197 is the Proton donor of the active site.

Belongs to the PNP/UDP phosphorylase family. MtnN subfamily. As to quaternary structure, homodimer.

The enzyme catalyses S-adenosyl-L-homocysteine + H2O = S-(5-deoxy-D-ribos-5-yl)-L-homocysteine + adenine. It carries out the reaction S-methyl-5'-thioadenosine + H2O = 5-(methylsulfanyl)-D-ribose + adenine. The catalysed reaction is 5'-deoxyadenosine + H2O = 5-deoxy-D-ribose + adenine. Its pathway is amino-acid biosynthesis; L-methionine biosynthesis via salvage pathway; S-methyl-5-thio-alpha-D-ribose 1-phosphate from S-methyl-5'-thioadenosine (hydrolase route): step 1/2. In terms of biological role, catalyzes the irreversible cleavage of the glycosidic bond in both 5'-methylthioadenosine (MTA) and S-adenosylhomocysteine (SAH/AdoHcy) to adenine and the corresponding thioribose, 5'-methylthioribose and S-ribosylhomocysteine, respectively. Also cleaves 5'-deoxyadenosine, a toxic by-product of radical S-adenosylmethionine (SAM) enzymes, into 5-deoxyribose and adenine. Thus, is required for in vivo function of the radical SAM enzymes biotin synthase and lipoic acid synthase, that are inhibited by 5'-deoxyadenosine accumulation. This is 5'-methylthioadenosine/S-adenosylhomocysteine nucleosidase from Salmonella agona (strain SL483).